We begin with the raw amino-acid sequence, 235 residues long: uncharacterized protein (235 aa).

The segment at 1 to 98 is disordered; sequence MDTKLSVTGA…NKKNTLHYSK (98 aa). Glycyl lysine isopeptide (Lys-Gly) (interchain with G-Cter in ubiquitin) cross-links involve residues Lys-16 and Lys-35. The span at 38-50 shows a compositional bias: basic residues; that stretch reads NGNKKRNKNRNRN. Positions 51–60 are enriched in basic and acidic residues; it reads KKTETKEQNE.

This is an uncharacterized protein from Saccharomyces cerevisiae (strain ATCC 204508 / S288c) (Baker's yeast).